The following is a 446-amino-acid chain: Maltoporin (446 aa).

Residues Met-1–Ala-25 form the signal peptide.

This sequence belongs to the porin LamB (TC 1.B.3) family. In terms of assembly, homotrimer formed of three 18-stranded antiparallel beta-barrels, containing three independent channels.

The protein resides in the cell outer membrane. The enzyme catalyses beta-maltose(in) = beta-maltose(out). Involved in the transport of maltose and maltodextrins. The chain is Maltoporin from Escherichia coli (strain SE11).